The following is a 291-amino-acid chain: START domain-containing protein 10 (291 aa).

Methionine 1 carries the post-translational modification N-acetylmethionine. The tract at residues 1 to 20 (MEKLAASTEPQGPRPVLGRE) is disordered. Positions 14-224 (RPVLGRESVQ…MYKACLKYPE (211 aa)) constitute an START domain. N6-succinyllysine is present on residues lysine 94, lysine 197, and lysine 202. A phosphoserine mark is found at serine 253 and serine 259. The interval 260-291 (LENIDESAVAESREERMGGAGGEGSDDDTSLT) is disordered. Serine 284 is subject to Phosphoserine; by CK2. Serine 289 is modified (phosphoserine).

Post-translationally, phosphorylation at Ser-284 by CK2 negatively regulates lipid transfer activity, possibly by decreasing membrane association.

Its subcellular location is the cell projection. The protein localises to the cilium. It localises to the flagellum. It is found in the cytoplasm. The protein resides in the membrane. Its function is as follows. May play metabolic roles in sperm maturation or fertilization. Phospholipid transfer protein that preferentially selects lipid species containing a palmitoyl or stearoyl chain on the sn-1 and an unsaturated fatty acyl chain (18:1 or 18:2) on the sn-2 position. Able to transfer phosphatidylcholine (PC) and phosphatidyetanolamline (PE) between membranes. The chain is START domain-containing protein 10 (STARD10) from Homo sapiens (Human).